The following is a 456-amino-acid chain: Adenylosuccinate synthetase isozyme 2 (456 aa).

The interval 1-24 is disordered; that stretch reads MAFAETYPAASSLPNGDCGRPRAR. GTP-binding positions include 39–45 and 67–69; these read GDEGKGK and GHT. Asp40 (proton acceptor) is an active-site residue. Positions 40 and 67 each coordinate Mg(2+). Asp40 lines the substrate pocket. Residues 40-43, 65-68, Thr162, Arg176, Asn255, Thr270, and Arg334 each bind IMP; these read DEGK and NAGH. The Proton donor role is filled by His68. Substrate is bound at residue 330–336; it reads VTTGRKR. GTP-binding positions include Arg336, 362–364, and 444–447; these read KLD and GVGK.

It belongs to the adenylosuccinate synthetase family. As to quaternary structure, homodimer. Requires Mg(2+) as cofactor.

The protein resides in the cytoplasm. Its subcellular location is the mitochondrion. The enzyme catalyses IMP + L-aspartate + GTP = N(6)-(1,2-dicarboxyethyl)-AMP + GDP + phosphate + 2 H(+). It participates in purine metabolism; AMP biosynthesis via de novo pathway; AMP from IMP: step 1/2. With respect to regulation, inhibited competitively by AMP and IMP and non-competitively by fructose 1,6-bisphosphate. In terms of biological role, plays an important role in the de novo pathway and in the salvage pathway of purine nucleotide biosynthesis. Catalyzes the first committed step in the biosynthesis of AMP from IMP. This is Adenylosuccinate synthetase isozyme 2 from Homo sapiens (Human).